A 423-amino-acid chain; its full sequence is UDP-N-acetylglucosamine 1-carboxyvinyltransferase 1 (423 aa).

23–24 serves as a coordination point for phosphoenolpyruvate; it reads KN. Arginine 96 lines the UDP-N-acetyl-alpha-D-glucosamine pocket. The active-site Proton donor is cysteine 120. Position 120 is a 2-(S-cysteinyl)pyruvic acid O-phosphothioketal (cysteine 120). UDP-N-acetyl-alpha-D-glucosamine-binding positions include 125–129, aspartate 309, and valine 331; that span reads RPIDL.

This sequence belongs to the EPSP synthase family. MurA subfamily.

It localises to the cytoplasm. It catalyses the reaction phosphoenolpyruvate + UDP-N-acetyl-alpha-D-glucosamine = UDP-N-acetyl-3-O-(1-carboxyvinyl)-alpha-D-glucosamine + phosphate. The protein operates within cell wall biogenesis; peptidoglycan biosynthesis. Its function is as follows. Cell wall formation. Adds enolpyruvyl to UDP-N-acetylglucosamine. The polypeptide is UDP-N-acetylglucosamine 1-carboxyvinyltransferase 1 (Streptococcus thermophilus (strain ATCC BAA-250 / LMG 18311)).